Here is a 187-residue protein sequence, read N- to C-terminus: Ribosome-recycling factor (187 aa).

It belongs to the RRF family.

The protein resides in the cytoplasm. Functionally, responsible for the release of ribosomes from messenger RNA at the termination of protein biosynthesis. May increase the efficiency of translation by recycling ribosomes from one round of translation to another. The polypeptide is Ribosome-recycling factor (Rhodopseudomonas palustris (strain HaA2)).